Reading from the N-terminus, the 400-residue chain is Acetate kinase (400 aa).

Residue Asn-7 participates in Mg(2+) binding. Lys-14 is a binding site for ATP. Arg-90 contributes to the substrate binding site. Asp-147 serves as the catalytic Proton donor/acceptor. ATP-binding positions include 207-211, 282-284, and 331-335; these read HLGNG, DFR, and GIGEN. Glu-384 is a Mg(2+) binding site.

It belongs to the acetokinase family. In terms of assembly, homodimer. The cofactor is Mg(2+). It depends on Mn(2+) as a cofactor.

Its subcellular location is the cytoplasm. It carries out the reaction acetate + ATP = acetyl phosphate + ADP. It functions in the pathway metabolic intermediate biosynthesis; acetyl-CoA biosynthesis; acetyl-CoA from acetate: step 1/2. In terms of biological role, catalyzes the formation of acetyl phosphate from acetate and ATP. Can also catalyze the reverse reaction. This Thermoanaerobacterium thermosaccharolyticum (strain ATCC 7956 / DSM 571 / NCIMB 9385 / NCA 3814 / NCTC 13789 / WDCM 00135 / 2032) (Clostridium thermosaccharolyticum) protein is Acetate kinase.